Here is a 169-residue protein sequence, read N- to C-terminus: Small ribosomal subunit protein uS5c (169 aa).

One can recognise an S5 DRBM domain in the interval 17 to 80; the sequence is WQERVVQIRR…ADGKKHVVEV (64 aa).

This sequence belongs to the universal ribosomal protein uS5 family. Part of the 30S ribosomal subunit. Contacts protein S4.

Its subcellular location is the plastid. It is found in the cyanelle. Functionally, with S4 and S12 plays an important role in translational accuracy. This Cyanophora paradoxa protein is Small ribosomal subunit protein uS5c (rps5).